Reading from the N-terminus, the 50-residue chain is Protein PsbN (50 aa).

The chain crosses the membrane as a helical span at residues 14-34 (VAVTILAVLLALTGFGLWTAF).

It belongs to the PsbN family.

It is found in the cellular thylakoid membrane. In terms of biological role, may play a role in photosystem I and II biogenesis. The protein is Protein PsbN of Prochlorococcus marinus (strain MIT 9515).